The sequence spans 221 residues: Thiamine-phosphate synthase (221 aa).

4-amino-2-methyl-5-(diphosphooxymethyl)pyrimidine is bound by residues 44 to 48 (QLRLK) and N80. Positions 81 and 100 each coordinate Mg(2+). Position 119 (T119) interacts with 4-amino-2-methyl-5-(diphosphooxymethyl)pyrimidine. 2-[(2R,5Z)-2-carboxy-4-methylthiazol-5(2H)-ylidene]ethyl phosphate is bound at residue 146 to 148 (TTT). Residue K149 coordinates 4-amino-2-methyl-5-(diphosphooxymethyl)pyrimidine. 2-[(2R,5Z)-2-carboxy-4-methylthiazol-5(2H)-ylidene]ethyl phosphate is bound at residue G176.

The protein belongs to the thiamine-phosphate synthase family. It depends on Mg(2+) as a cofactor.

The catalysed reaction is 2-[(2R,5Z)-2-carboxy-4-methylthiazol-5(2H)-ylidene]ethyl phosphate + 4-amino-2-methyl-5-(diphosphooxymethyl)pyrimidine + 2 H(+) = thiamine phosphate + CO2 + diphosphate. It catalyses the reaction 2-(2-carboxy-4-methylthiazol-5-yl)ethyl phosphate + 4-amino-2-methyl-5-(diphosphooxymethyl)pyrimidine + 2 H(+) = thiamine phosphate + CO2 + diphosphate. The enzyme catalyses 4-methyl-5-(2-phosphooxyethyl)-thiazole + 4-amino-2-methyl-5-(diphosphooxymethyl)pyrimidine + H(+) = thiamine phosphate + diphosphate. It participates in cofactor biosynthesis; thiamine diphosphate biosynthesis; thiamine phosphate from 4-amino-2-methyl-5-diphosphomethylpyrimidine and 4-methyl-5-(2-phosphoethyl)-thiazole: step 1/1. Functionally, condenses 4-methyl-5-(beta-hydroxyethyl)thiazole monophosphate (THZ-P) and 2-methyl-4-amino-5-hydroxymethyl pyrimidine pyrophosphate (HMP-PP) to form thiamine monophosphate (TMP). This chain is Thiamine-phosphate synthase, found in Hyphomonas neptunium (strain ATCC 15444).